The following is a 400-amino-acid chain: Dual specificity mitogen-activated protein kinase kinase 2 (400 aa).

At Met1 the chain carries N-acetylmethionine. Ser23 carries the post-translational modification Phosphoserine. The 298-residue stretch at 72-369 folds into the Protein kinase domain; it reads FERISELGAG…LKMLMSHTFI (298 aa). ATP-binding positions include 78–86 and Lys101; that span reads LGAGNGGVV. Asp194 acts as the Proton acceptor in catalysis. The residue at position 222 (Ser222) is a Phosphoserine; by RAF. Phosphoserine occurs at positions 226, 293, 295, and 306. The interval 288-309 is disordered; it reads EGEPHSISPRPRPPGRPISGHG. Phosphothreonine occurs at positions 394 and 396.

It belongs to the protein kinase superfamily. STE Ser/Thr protein kinase family. MAP kinase kinase subfamily. In terms of assembly, interacts with MORG1. Interacts with SGK1. Interacts with KSR1. Interacts with KSR1 and BRAF; the interaction with KSR1 mediates KSR1-BRAF dimerization. Interacts with GLS. Mg(2+) serves as cofactor. MAPKK is itself dependent on Ser/Thr phosphorylation for activity catalyzed by MAP kinase kinase kinases (RAF or MEKK1).

It is found in the cytoplasm. Its subcellular location is the membrane. The catalysed reaction is L-seryl-[protein] + ATP = O-phospho-L-seryl-[protein] + ADP + H(+). The enzyme catalyses L-threonyl-[protein] + ATP = O-phospho-L-threonyl-[protein] + ADP + H(+). It catalyses the reaction L-tyrosyl-[protein] + ATP = O-phospho-L-tyrosyl-[protein] + ADP + H(+). Catalyzes the concomitant phosphorylation of a threonine and a tyrosine residue in a Thr-Glu-Tyr sequence located in MAP kinases. Activates the ERK1 and ERK2 MAP kinases. Activates BRAF in a KSR1 or KSR2-dependent manner; by binding to KSR1 or KSR2 releases the inhibitory intramolecular interaction between KSR1 or KSR2 protein kinase and N-terminal domains which promotes KSR1 or KSR2-BRAF dimerization and BRAF activation. The sequence is that of Dual specificity mitogen-activated protein kinase kinase 2 (MAP2K2) from Canis lupus familiaris (Dog).